The primary structure comprises 84 residues: Toxin-like TcoNTxP1 (84 aa).

A signal peptide spans 1–19; it reads MKRMILFTSCLLLIDIVVG. The region spanning 21-82 is the LCN-type CS-alpha/beta domain; the sequence is KEGYPADSKG…VWDSATNKCG (62 aa). 4 disulfides stabilise this stretch: C31–C81, C35–C57, C43–C62, and C47–C64. A Cysteine amide modification is found at C81. The propeptide occupies 82–84; that stretch reads GKK.

In terms of tissue distribution, expressed by the venom gland.

The protein localises to the secreted. This protein is not toxic. It induces an immune response similar to that induced by whole venom. Thus, polyclonal antibodies raised against this protein can neutralize the effects of the venom. The polypeptide is Toxin-like TcoNTxP1 (Tityus costatus (Brazilian scorpion)).